Consider the following 961-residue polypeptide: Transcription factor MYB3R-4 (961 aa).

The disordered stretch occupies residues 1–33 (MEAESSTPQERIPKLRHGRTSGPARRSTRGQWT). HTH myb-type domains are found at residues 24–75 (ARRS…QKVL), 76–131 (NPEL…NPAI), and 132–182 (NKEA…KKKL). DNA-binding regions (H-T-H motif) lie at residues 52-75 (WKKI…QKVL), 104-127 (WSTI…HNHL), and 155-178 (WAEL…HSSV). Disordered stretches follow at residues 390 to 457 (GHSV…LIIS) and 534 to 555 (RPHS…EDMG). 2 stretches are compositionally biased toward polar residues: residues 391-405 (HSVS…NEFN) and 416-430 (SSAS…TKSP). A compositionally biased stretch (low complexity) spans 431–444 (TQSSSSRFTATAAS). The span at 534 to 554 (RPHSLPKHEPNMTNEQHHEDM) shows a compositional bias: basic and acidic residues. The short motif at 612–619 (GKKTLVGA) is the Nuclear localization signal element. Residues 756-781 (NTGKPVLSTPGQSVTKAEKAQVSTPR) are disordered. Over residues 764-781 (TPGQSVTKAEKAQVSTPR) the composition is skewed to polar residues.

In terms of assembly, component of a DREAM-like complex which modulates a variety of developmentally regulated genes and of the mitotic genes in proliferating and differentiated cells. Associates with CDKA-1, RBR1 and E2FB, but not with E2FC, in proliferating cells, at early stages of leaves development. Expressed in roots, cotyledons and leaves, especially in vascular tissues, and in flowers.

The protein localises to the nucleus. Functionally, transcription factor that binds 5'-AACGG-3' motifs in gene promoters. Involved in the regulation of cytokinesis, probably via the activation of several G2/M phase-specific genes transcription (e.g. KNOLLE). Required for the maintenance of diploidy. Involved in transcription regulation during induced endoreduplication at the powdery mildew (e.g. G.orontii) infection site, thus promoting G.orontii growth and reproduction. This is Transcription factor MYB3R-4 from Arabidopsis thaliana (Mouse-ear cress).